The chain runs to 596 residues: Aspartate--tRNA(Asp/Asn) ligase (596 aa).

An L-aspartate-binding site is contributed by glutamate 175. Residues 199 to 202 (QQYK) form an aspartate region. L-aspartate contacts are provided by arginine 221 and histidine 454. Position 221–223 (221–223 (RDE)) interacts with ATP. Glutamate 488 lines the ATP pocket. Arginine 495 contacts L-aspartate. ATP is bound at residue 540–543 (GVDR).

The protein belongs to the class-II aminoacyl-tRNA synthetase family. Type 1 subfamily. In terms of assembly, homodimer.

The protein localises to the cytoplasm. The enzyme catalyses tRNA(Asx) + L-aspartate + ATP = L-aspartyl-tRNA(Asx) + AMP + diphosphate. Functionally, aspartyl-tRNA synthetase with relaxed tRNA specificity since it is able to aspartylate not only its cognate tRNA(Asp) but also tRNA(Asn). Reaction proceeds in two steps: L-aspartate is first activated by ATP to form Asp-AMP and then transferred to the acceptor end of tRNA(Asp/Asn). In Bartonella bacilliformis (strain ATCC 35685 / KC583 / Herrer 020/F12,63), this protein is Aspartate--tRNA(Asp/Asn) ligase.